We begin with the raw amino-acid sequence, 702 residues long: Polyphosphate kinase (702 aa).

Asn-55 is a binding site for ATP. Residues Arg-389 and Arg-419 each contribute to the Mg(2+) site. His-449 serves as the catalytic Phosphohistidine intermediate. Tyr-482, Arg-578, and His-606 together coordinate ATP.

It belongs to the polyphosphate kinase 1 (PPK1) family. Mg(2+) is required as a cofactor. An intermediate of this reaction is the autophosphorylated ppk in which a phosphate is covalently linked to a histidine residue through a N-P bond.

The enzyme catalyses [phosphate](n) + ATP = [phosphate](n+1) + ADP. Functionally, catalyzes the reversible transfer of the terminal phosphate of ATP to form a long-chain polyphosphate (polyP). This is Polyphosphate kinase from Bacillus cereus (strain ATCC 14579 / DSM 31 / CCUG 7414 / JCM 2152 / NBRC 15305 / NCIMB 9373 / NCTC 2599 / NRRL B-3711).